A 295-amino-acid polypeptide reads, in one-letter code: Ribosomal RNA small subunit methyltransferase A (295 aa).

Residues asparagine 29, leucine 31, glycine 56, glutamate 77, aspartate 102, and asparagine 128 each contribute to the S-adenosyl-L-methionine site.

Belongs to the class I-like SAM-binding methyltransferase superfamily. rRNA adenine N(6)-methyltransferase family. RsmA subfamily.

It localises to the cytoplasm. The enzyme catalyses adenosine(1518)/adenosine(1519) in 16S rRNA + 4 S-adenosyl-L-methionine = N(6)-dimethyladenosine(1518)/N(6)-dimethyladenosine(1519) in 16S rRNA + 4 S-adenosyl-L-homocysteine + 4 H(+). Its function is as follows. Specifically dimethylates two adjacent adenosines (A1518 and A1519) in the loop of a conserved hairpin near the 3'-end of 16S rRNA in the 30S particle. May play a critical role in biogenesis of 30S subunits. The sequence is that of Ribosomal RNA small subunit methyltransferase A from Listeria monocytogenes serovar 1/2a (strain ATCC BAA-679 / EGD-e).